Reading from the N-terminus, the 370-residue chain is Spermidine/putrescine import ATP-binding protein PotA 1 (370 aa).

Residues 12 to 250 enclose the ABC transporter domain; the sequence is VSIRAVRKVY…PGNRFVADFI (239 aa). 48–55 contributes to the ATP binding site; the sequence is GPSGCGKT.

This sequence belongs to the ABC transporter superfamily. Spermidine/putrescine importer (TC 3.A.1.11.1) family. The complex is composed of two ATP-binding proteins (PotA), two transmembrane proteins (PotB and PotC) and a solute-binding protein (PotD).

The protein localises to the cell inner membrane. It carries out the reaction ATP + H2O + polyamine-[polyamine-binding protein]Side 1 = ADP + phosphate + polyamineSide 2 + [polyamine-binding protein]Side 1.. In terms of biological role, part of the ABC transporter complex PotABCD involved in spermidine/putrescine import. Responsible for energy coupling to the transport system. The polypeptide is Spermidine/putrescine import ATP-binding protein PotA 1 (Pseudomonas aeruginosa (strain ATCC 15692 / DSM 22644 / CIP 104116 / JCM 14847 / LMG 12228 / 1C / PRS 101 / PAO1)).